Here is a 241-residue protein sequence, read N- to C-terminus: Agamous-like MADS-box protein AGL9 homolog (241 aa).

An MADS-box domain is found at 3–57 (RGRVELKRIENKINRQVTFAKRRNGLLKKAYELSVLCDAEVALIIFSNRGKLYEF). Positions 89-179 (EISSQQEYLK…KQRLMEGSTL (91 aa)) constitute a K-box domain.

The protein resides in the nucleus. Its function is as follows. Probable transcription factor. This is Agamous-like MADS-box protein AGL9 homolog (FBP2) from Petunia hybrida (Petunia).